We begin with the raw amino-acid sequence, 284 residues long: 2-dehydro-3-deoxyphosphooctonate aldolase (284 aa).

Belongs to the KdsA family.

The protein resides in the cytoplasm. It catalyses the reaction D-arabinose 5-phosphate + phosphoenolpyruvate + H2O = 3-deoxy-alpha-D-manno-2-octulosonate-8-phosphate + phosphate. Its pathway is carbohydrate biosynthesis; 3-deoxy-D-manno-octulosonate biosynthesis; 3-deoxy-D-manno-octulosonate from D-ribulose 5-phosphate: step 2/3. The protein operates within bacterial outer membrane biogenesis; lipopolysaccharide biosynthesis. The sequence is that of 2-dehydro-3-deoxyphosphooctonate aldolase from Yersinia pseudotuberculosis serotype O:1b (strain IP 31758).